The sequence spans 592 residues: Methionine--tRNA ligase (592 aa).

A 'HIGH' region motif is present at residues 12–22 (PYANGPFHVGH). Zn(2+) is bound by residues Cys-144, Cys-147, Cys-157, and Cys-160. Positions 342–346 (KMSTS) match the 'KMSKS' region motif. Thr-345 is a binding site for ATP.

This sequence belongs to the class-I aminoacyl-tRNA synthetase family. MetG type 1 subfamily. As to quaternary structure, monomer. Zn(2+) serves as cofactor.

The protein localises to the cytoplasm. The catalysed reaction is tRNA(Met) + L-methionine + ATP = L-methionyl-tRNA(Met) + AMP + diphosphate. Its function is as follows. Is required not only for elongation of protein synthesis but also for the initiation of all mRNA translation through initiator tRNA(fMet) aminoacylation. In Roseiflexus castenholzii (strain DSM 13941 / HLO8), this protein is Methionine--tRNA ligase.